The chain runs to 220 residues: Mediator of RNA polymerase II transcription subunit 7 (220 aa).

The protein belongs to the Mediator complex subunit 7 family. As to quaternary structure, component of the Mediator complex. Interacts with MED21.

The protein resides in the nucleus. Functionally, component of the Mediator complex, a coactivator involved in the regulated transcription of nearly all RNA polymerase II-dependent genes. Mediator functions as a bridge to convey information from gene-specific regulatory proteins to the basal RNA polymerase II transcription machinery. Mediator is recruited to promoters by direct interactions with regulatory proteins and serves as a scaffold for the assembly of a functional preinitiation complex with RNA polymerase II and the general transcription factors. Required for activated transcription of the MtnA, MtnB and MtnD genes. This chain is Mediator of RNA polymerase II transcription subunit 7 (MED7), found in Drosophila melanogaster (Fruit fly).